The sequence spans 244 residues: Tetraspanin-7 (244 aa).

Residues 1 to 11 (METKPVITCLK) are Cytoplasmic-facing. A helical membrane pass occupies residues 12–35 (TLLIIYSFVFWITGVILLAVGVWG). At 36–51 (KLTLGTYISLIAENST) the chain is on the extracellular side. Asparagine 49 carries an N-linked (GlcNAc...) asparagine glycan. The helical transmembrane segment at 52–70 (NAPYVLIGTGTTIVVFGLF) threads the bilayer. Topologically, residues 71-81 (GCFATCRGSPW) are cytoplasmic. The helical transmembrane segment at 82–107 (MLKLYAMFLSLVFLAELVAGISGFVF) threads the bilayer. Residues 108-208 (RHEIKDTFLR…LVTSFMETNM (101 aa)) are Extracellular-facing. Residues asparagine 150, asparagine 153, asparagine 172, and asparagine 183 are each glycosylated (N-linked (GlcNAc...) asparagine). Residues 209–229 (GIIAGVAFGIAFSQLIGMLLA) traverse the membrane as a helical segment. Residues 230-244 (CCLSRFITANQYEMV) lie on the Cytoplasmic side of the membrane.

It belongs to the tetraspanin (TM4SF) family.

The protein resides in the membrane. Functionally, may be involved in cell proliferation and cell motility. The sequence is that of Tetraspanin-7 (TSPAN7) from Pongo pygmaeus (Bornean orangutan).